The primary structure comprises 443 residues: EP1-like glycoprotein 4 (443 aa).

Residues 1–22 (MEFSTTLALFFTLSIFLVGAQA) form the signal peptide. The 131-residue stretch at 29-159 (QFRVVNEGGY…NGKFVWQSFD (131 aa)) folds into the Bulb-type lectin domain. 4 N-linked (GlcNAc...) asparagine glycosylation sites follow: asparagine 66, asparagine 102, asparagine 258, and asparagine 269. The stretch at 254–296 (GSQFNVSTFLSRPKHNATLSFLRLESDGNIRVWSYSTLATSTA) is one WD repeat. In terms of domain architecture, PAN spans 356–433 (CDPKTFHYFK…TSLVAYVKAP (78 aa)). 2 cysteine pairs are disulfide-bonded: cysteine 387-cysteine 409 and cysteine 391-cysteine 397. N-linked (GlcNAc...) asparagine glycosylation occurs at asparagine 434.

The protein resides in the secreted. It is found in the cell wall. This chain is EP1-like glycoprotein 4, found in Arabidopsis thaliana (Mouse-ear cress).